Consider the following 146-residue polypeptide: Hemoglobin subunit beta (146 aa).

At Val-1 the chain carries N-acetylvaline. The 145-residue stretch at 2–146 folds into the Globin domain; that stretch reads HLTDAEKAAI…VASALAHKYH (145 aa). His-63 contacts heme b. Position 82 is an N6-acetyllysine (Lys-82). His-92 is a heme b binding site. Cys-93 is modified (S-nitrosocysteine). Lys-144 is subject to N6-acetyllysine.

This sequence belongs to the globin family. As to quaternary structure, heterotetramer of two alpha chains and two beta chains. As to expression, red blood cells.

Functionally, involved in oxygen transport from the lung to the various peripheral tissues. This chain is Hemoglobin subunit beta (HBB), found in Microtus xanthognathus (Yellow-cheeked vole).